A 512-amino-acid chain; its full sequence is Probable amidase At4g34880 (512 aa).

Catalysis depends on charge relay system residues lysine 117 and serine 198. The active-site Acyl-ester intermediate is the serine 222.

Belongs to the amidase family. As to expression, expressed in vasculature of roots, cotyledons, leaves and sepals.

The catalysed reaction is a monocarboxylic acid amide + H2O = a monocarboxylate + NH4(+). This chain is Probable amidase At4g34880, found in Arabidopsis thaliana (Mouse-ear cress).